The sequence spans 838 residues: Kinesin-like protein KIFC2 (838 aa).

The span at 23–32 (AAAAEPGDPA) shows a compositional bias: low complexity. 2 disordered regions span residues 23–48 (AAAA…DLPA) and 140–185 (LLQG…GQQP). Over residues 156–167 (DGSTSQEESPSH) the composition is skewed to polar residues. Positions 186 to 351 (LQLEEDQRAW…SLRQGCGDLR (166 aa)) form a coiled coil. The Kinesin motor domain occupies 409–740 (NIRVLCRLRP…ARRSPRGRRI (332 aa)). An ATP-binding site is contributed by 484-491 (GQTGTGKT). The tract at residues 718 to 792 (RSPPTRARPP…SPGPPAPLRR (75 aa)) is disordered.

This sequence belongs to the TRAFAC class myosin-kinesin ATPase superfamily. Kinesin family.

The protein resides in the cytoplasm. The protein localises to the cytoskeleton. Functionally, may play a role in microtubule-dependent retrograde axonal transport. May function as the motor for the transport of multivesicular body (MVB)-like organelles in dendrites. This is Kinesin-like protein KIFC2 (KIFC2) from Homo sapiens (Human).